We begin with the raw amino-acid sequence, 109 residues long: Putative antitoxin HigA3 (109 aa).

Positions 41 to 97 (LAEIRKALGHARQADVAALMGVSQARVSKLESGDLSHTELGTLQAYVAALGGHLRIV) constitute an HTH cro/C1-type domain. The H-T-H motif DNA-binding region spans 53 to 72 (QADVAALMGVSQARVSKLES).

Functionally, putative antitoxin component of a type II toxin-antitoxin (TA) system. Its cognate toxin would be HigB3. In Mycobacterium tuberculosis (strain ATCC 25618 / H37Rv), this protein is Putative antitoxin HigA3.